The chain runs to 104 residues: Large ribosomal subunit protein uL24 (104 aa).

It belongs to the universal ribosomal protein uL24 family. Part of the 50S ribosomal subunit.

Its function is as follows. One of two assembly initiator proteins, it binds directly to the 5'-end of the 23S rRNA, where it nucleates assembly of the 50S subunit. Functionally, one of the proteins that surrounds the polypeptide exit tunnel on the outside of the subunit. This is Large ribosomal subunit protein uL24 from Pseudoalteromonas atlantica (strain T6c / ATCC BAA-1087).